The chain runs to 155 residues: Small ribosomal subunit protein uS7cz/uS7cy (155 aa).

This sequence belongs to the universal ribosomal protein uS7 family. In terms of assembly, part of the 30S ribosomal subunit.

It is found in the plastid. The protein localises to the chloroplast. In terms of biological role, one of the primary rRNA binding proteins, it binds directly to 16S rRNA where it nucleates assembly of the head domain of the 30S subunit. In Populus trichocarpa (Western balsam poplar), this protein is Small ribosomal subunit protein uS7cz/uS7cy (rps7-A).